The chain runs to 375 residues: Erythronate-4-phosphate dehydrogenase (375 aa).

Residues S45 and T66 each contribute to the substrate site. Residues D146 and T175 each coordinate NAD(+). R208 is a catalytic residue. Position 232 (D232) interacts with NAD(+). E237 is an active-site residue. H254 serves as the catalytic Proton donor. G257 contacts NAD(+). Y258 serves as a coordination point for substrate.

Belongs to the D-isomer specific 2-hydroxyacid dehydrogenase family. PdxB subfamily. In terms of assembly, homodimer.

It localises to the cytoplasm. It catalyses the reaction 4-phospho-D-erythronate + NAD(+) = (R)-3-hydroxy-2-oxo-4-phosphooxybutanoate + NADH + H(+). The protein operates within cofactor biosynthesis; pyridoxine 5'-phosphate biosynthesis; pyridoxine 5'-phosphate from D-erythrose 4-phosphate: step 2/5. Functionally, catalyzes the oxidation of erythronate-4-phosphate to 3-hydroxy-2-oxo-4-phosphonooxybutanoate. The protein is Erythronate-4-phosphate dehydrogenase of Edwardsiella ictaluri (strain 93-146).